A 323-amino-acid chain; its full sequence is Coiled-coil domain-containing protein 160 (323 aa).

The tract at residues 1–81 is disordered; the sequence is MDARRKHWKD…EGEQDSNLRE (81 aa). A compositionally biased stretch (polar residues) spans 48 to 58; it reads SNFSVRNTQEG. Residues 144–289 adopt a coiled-coil conformation; sequence LRLHLLNEEL…IKNELRVEKT (146 aa).

This sequence belongs to the CCDC160 family.

This is Coiled-coil domain-containing protein 160 (Ccdc160) from Mus musculus (Mouse).